Here is a 210-residue protein sequence, read N- to C-terminus: Guanylate kinase (210 aa).

The Guanylate kinase-like domain maps to 6-184 (GNIYIVVAPS…ARLDLISIVR (179 aa)). Position 13–20 (13–20 (APSGAGKT)) interacts with ATP.

It belongs to the guanylate kinase family.

It localises to the cytoplasm. The enzyme catalyses GMP + ATP = GDP + ADP. Functionally, essential for recycling GMP and indirectly, cGMP. In Chromobacterium violaceum (strain ATCC 12472 / DSM 30191 / JCM 1249 / CCUG 213 / NBRC 12614 / NCIMB 9131 / NCTC 9757 / MK), this protein is Guanylate kinase.